The following is a 163-amino-acid chain: Probable calcium-binding protein CML26 (163 aa).

At Ala2 the chain carries N-acetylalanine. EF-hand domains are found at residues 16 to 51 (STDM…MGTS), 52 to 82 (YTEE…TICR), 85 to 120 (SSAV…LGMT), and 121 to 156 (CSVE…PELV). Ca(2+)-binding residues include Asp29, Asn31, Asp33, Lys35, Glu40, Asp65, Asp67, Asp69, Glu76, Asp98, Asn100, Asn102, Glu109, Asp134, Asp136, Asp138, Asn140, and Glu145.

Functionally, potential calcium sensor. The protein is Probable calcium-binding protein CML26 (CML26) of Arabidopsis thaliana (Mouse-ear cress).